Consider the following 87-residue polypeptide: MVSQLFEEKAKAVNELPTKPSTDELLELYGLYKQATVGDNDKEKPGIFNMKDRYKWEAWEDLKGKSQEDAEKEYIAYVDNLIAKYSS.

The ACB domain occupies 2–87 (VSQLFEEKAK…VDNLIAKYSS (86 aa)). An acyl-CoA contacts are provided by residues 29 to 33 (YGLYK), lysine 51, lysine 55, and tyrosine 74.

This sequence belongs to the ACBP family.

In terms of biological role, binds medium- and long-chain acyl-CoA esters with very high affinity and may function as an intracellular carrier of acyl-CoA esters. The sequence is that of Acyl-CoA-binding protein 2 (ACB2) from Saccharomyces pastorianus (strain ATCC 76670 / Carlsberg bottom yeast no.2 / CBS 1503 / CLIB 180 / NBRC 10610 / NRRL Y-1525) (Saaz-type lager yeast).